Consider the following 1519-residue polypeptide: Putative lipoprotein YghJ (1519 aa).

A signal peptide spans 1-23 (MNKKFKYKKSLLAAILSATLLAG). Disordered regions lie at residues 22-107 (AGCD…GATC) and 226-247 (NAAT…TTPG). A lipid anchor (N-palmitoyl cysteine) is attached at Cys24. A lipid anchor (S-diacylglycerol cysteine) is attached at Cys24. Positions 31 to 42 (SSSDTPPVDSGT) are enriched in low complexity. Residues 51-77 (DPTPNPEPTPEPTPDPEPTPEPIPDPE) show a composition bias toward pro residues. The segment covering 97-107 (GGSQRVTGATC) has biased composition (polar residues). Positions 234-247 (STHTSPVVPVTTPG) are enriched in low complexity. The region spanning 1080-1380 (GNMQSTGLWA…MYAQLKEWAE (301 aa)) is the Peptidase M60 domain. A disordered region spans residues 1497–1519 (DLPKPEQGPETINQVTEHKMSAE).

The protein to V.cholerae AcfD (VC_0845).

The protein resides in the cell membrane. Functionally, may be a substrate of the type II secretion system beta (T2SS-beta). In Escherichia coli O78:H11 (strain H10407 / ETEC), this protein is Putative lipoprotein YghJ (yghJ).